Reading from the N-terminus, the 506-residue chain is Pentatricopeptide repeat-containing protein At5g18475 (506 aa).

A disordered region spans residues 28–48 (SEKKKKPSPPPESSISPVETN). PPR repeat units lie at residues 88–122 (NNAT…TCRF), 123–158 (QESL…RVKP), 159–194 (SLNA…GLQP), 195–229 (NTCI…GISY), 231–266 (NSIT…GISP), 267–301 (DPVT…GCNP), 302–336 (NVYN…GLKL), 337–371 (DTVG…RCRA), 372–406 (DTLT…GVHL), 407–441 (NKGS…GIWP), 442–476 (HHAT…GLIP), and 477–506 (GPKS…SLVS).

This sequence belongs to the PPR family. P subfamily.

This chain is Pentatricopeptide repeat-containing protein At5g18475, found in Arabidopsis thaliana (Mouse-ear cress).